A 1061-amino-acid chain; its full sequence is Eukaryotic translation initiation factor 3 subunit A (1061 aa).

The span at 114–126 (QSSIEATTGSSSV) shows a compositional bias: polar residues. The disordered stretch occupies residues 114-133 (QSSIEATTGSSSVEDLEASE). The PCI domain occupies 339 to 523 (LQKAATFVVL…GVLSFDVDVF (185 aa)). Coiled coils occupy residues 609-724 (EVIQ…KRLD) and 789-906 (RADL…AAAA). Positions 828–901 (REKREREEKE…EAMARRRAEK (74 aa)) are enriched in basic and acidic residues. Residues 828 to 1061 (REKREREEKE…KYVPKFRREG (234 aa)) form a disordered region. Composition is skewed to pro residues over residues 950-962 (SGPPPARAAPPPI) and 1000-1011 (APPPERSGPPPR).

This sequence belongs to the eIF-3 subunit A family. In terms of assembly, component of the eukaryotic translation initiation factor 3 (eIF-3) complex.

It is found in the cytoplasm. Its function is as follows. RNA-binding component of the eukaryotic translation initiation factor 3 (eIF-3) complex, which is involved in protein synthesis of a specialized repertoire of mRNAs and, together with other initiation factors, stimulates binding of mRNA and methionyl-tRNAi to the 40S ribosome. The eIF-3 complex specifically targets and initiates translation of a subset of mRNAs involved in cell proliferation. This is Eukaryotic translation initiation factor 3 subunit A from Chaetomium globosum (strain ATCC 6205 / CBS 148.51 / DSM 1962 / NBRC 6347 / NRRL 1970) (Soil fungus).